Reading from the N-terminus, the 533-residue chain is RNA end formation protein 2 (533 aa).

Disordered stretches follow at residues 187 to 254 (SNST…SSMK), 260 to 279 (LFNK…SKKK), and 321 to 344 (SSST…PLKK). Residues 206-222 (KIKDSEKEKEKEKDKSK) are compositionally biased toward basic and acidic residues. The span at 242–252 (SSPSPTASTSS) shows a compositional bias: low complexity. Over residues 321–338 (SSSTSGSSTTTVATPASS) the composition is skewed to low complexity.

As to quaternary structure, interacts with FIR1. Component of the cleavage and polyadenylation factor (CPF) complex, which is composed of PTI1, SYC1, SSU72, GLC7, MPE1, REF2, PFS2, PTA1, YSH1/BRR5, SWD2, CFT2/YDH1, YTH1, CFT1/YHH1, FIP1 and PAP1. Component of the APT complex, which is a subcomplex of CPF, and is composed of PTI1, SYC1, SSU72, GLC7, REF2, PTA1 and SWD2.

The protein localises to the nucleus. In terms of biological role, RNA-binding component of the cleavage and polyadenylation factor (CPF) complex, which plays a key role in polyadenylation-dependent pre-mRNA 3'-end formation and cooperates with cleavage factors including the CFIA complex and NAB4/CFIB. Negative regulator of poly(A) synthesis. Component of the APT complex, which may be involved in polyadenylation-independent transcript 3'-end formation. REF2 is required for 3'-end formation of snoRNAs. The protein is RNA end formation protein 2 (REF2) of Saccharomyces cerevisiae (strain ATCC 204508 / S288c) (Baker's yeast).